Here is a 159-residue protein sequence, read N- to C-terminus: MDATFWALIGLIIFLAILAYLKVPGMVGRSLDERADRIKNELEEARTLREEAQQLLAEYHRKRKEAEKEAGDIVASAEREAKALLEDAKRATEEYVARRNKLAEQKIATAEVDAINAVRASAVDLAVAAAGKIVADKVDTKVAGNLFKDALSQVKSNLN.

A helical transmembrane segment spans residues 1 to 21 (MDATFWALIGLIIFLAILAYL).

Belongs to the ATPase B chain family. As to quaternary structure, F-type ATPases have 2 components, F(1) - the catalytic core - and F(0) - the membrane proton channel. F(1) has five subunits: alpha(3), beta(3), gamma(1), delta(1), epsilon(1). F(0) has three main subunits: a(1), b(2) and c(10-14). The alpha and beta chains form an alternating ring which encloses part of the gamma chain. F(1) is attached to F(0) by a central stalk formed by the gamma and epsilon chains, while a peripheral stalk is formed by the delta and b chains.

The protein localises to the cell inner membrane. In terms of biological role, f(1)F(0) ATP synthase produces ATP from ADP in the presence of a proton or sodium gradient. F-type ATPases consist of two structural domains, F(1) containing the extramembraneous catalytic core and F(0) containing the membrane proton channel, linked together by a central stalk and a peripheral stalk. During catalysis, ATP synthesis in the catalytic domain of F(1) is coupled via a rotary mechanism of the central stalk subunits to proton translocation. Functionally, component of the F(0) channel, it forms part of the peripheral stalk, linking F(1) to F(0). The chain is ATP synthase subunit b 2 from Brucella anthropi (strain ATCC 49188 / DSM 6882 / CCUG 24695 / JCM 21032 / LMG 3331 / NBRC 15819 / NCTC 12168 / Alc 37) (Ochrobactrum anthropi).